The sequence spans 156 residues: MNLNATLFAQMVVFLVLAWFTMKFVWPPLINALDERSKKIADGLAAAEKGKAELDAAHKRVDQELAQARNDGQQRIADAEKRAQAVAEEIKANAQAEAARIVAQAKAEAEQQIVKAREALRGEVASLAVKGAEQILKREVDQTAHAQLLNQLKAEL.

The helical transmembrane segment at 7 to 29 threads the bilayer; the sequence is LFAQMVVFLVLAWFTMKFVWPPL.

The protein belongs to the ATPase B chain family. As to quaternary structure, F-type ATPases have 2 components, F(1) - the catalytic core - and F(0) - the membrane proton channel. F(1) has five subunits: alpha(3), beta(3), gamma(1), delta(1), epsilon(1). F(0) has three main subunits: a(1), b(2) and c(10-14). The alpha and beta chains form an alternating ring which encloses part of the gamma chain. F(1) is attached to F(0) by a central stalk formed by the gamma and epsilon chains, while a peripheral stalk is formed by the delta and b chains.

Its subcellular location is the cell inner membrane. F(1)F(0) ATP synthase produces ATP from ADP in the presence of a proton or sodium gradient. F-type ATPases consist of two structural domains, F(1) containing the extramembraneous catalytic core and F(0) containing the membrane proton channel, linked together by a central stalk and a peripheral stalk. During catalysis, ATP synthesis in the catalytic domain of F(1) is coupled via a rotary mechanism of the central stalk subunits to proton translocation. In terms of biological role, component of the F(0) channel, it forms part of the peripheral stalk, linking F(1) to F(0). In Burkholderia ambifaria (strain MC40-6), this protein is ATP synthase subunit b.